Consider the following 438-residue polypeptide: sn-glycerol-3-phosphate-binding periplasmic protein UgpB (438 aa).

An N-terminal signal peptide occupies residues 1 to 23 (MKPLRYTASALALGLALMANAQA). Positions 65, 89, 144, 270, 307, 346, and 397 each coordinate sn-glycerol 3-phosphate.

It belongs to the bacterial solute-binding protein 1 family. As to quaternary structure, the complex is composed of two ATP-binding proteins (UgpC), two transmembrane proteins (UgpA and UgpE) and a solute-binding protein (UgpB).

The protein resides in the periplasm. Its function is as follows. Part of the ABC transporter complex UgpBAEC involved in sn-glycerol-3-phosphate (G3P) import. Binds G3P. The polypeptide is sn-glycerol-3-phosphate-binding periplasmic protein UgpB (ugpB) (Escherichia coli O1:K1 / APEC).